The following is a 471-amino-acid chain: Putative multidrug resistance protein MdtD (471 aa).

At 1-12 (MTDLPDSTRWQL) the chain is on the periplasmic side. The chain crosses the membrane as a helical span at residues 13-33 (WIVAFGFFMQSLDTTIVNTAI). Topologically, residues 34-48 (PSMAQSLGESPLHMH) are cytoplasmic. Residues 49-69 (MVIVSYVLTVAVMLPASGWLA) traverse the membrane as a helical segment. Topologically, residues 70–76 (DKVGVRN) are periplasmic. A helical transmembrane segment spans residues 77 to 97 (IFFTAIVLFTLGSLFCALSGT). The Cytoplasmic segment spans residues 98–101 (LNEL). A helical transmembrane segment spans residues 102–124 (LLARALQGVGGAMMVPVGRLTVM). Topologically, residues 125 to 137 (KIVPREQYMAAMT) are periplasmic. Residues 138 to 158 (FVTLPGQVGPLLGPALGGLLV) form a helical membrane-spanning segment. Topologically, residues 159 to 164 (EYASWH) are cytoplasmic. A helical transmembrane segment spans residues 165–185 (WIFLINIPVGIIGAIATLMLM). Residues 186-196 (PNYTMQTRRFD) are Periplasmic-facing. The chain crosses the membrane as a helical span at residues 197–217 (LSGFLLLAVGMAVLTLALDGS). Residues 218-224 (KGTGLSP) are Cytoplasmic-facing. The chain crosses the membrane as a helical span at residues 225–245 (LAIAGLVAVGVVALVLYLLHA). Over 246 to 262 (RNNNRALFSLKLFRTRT) the chain is Periplasmic. Residues 263–283 (FSLGLAGSFAGRIGSGMLPFM) form a helical membrane-spanning segment. The Cytoplasmic portion of the chain corresponds to 284–285 (TP). The chain crosses the membrane as a helical span at residues 286–306 (VFLQIGLGFSPFHAGLMMIPM). Residues 307 to 341 (VLGSMGMKRIVVQVVNRFGYRRVLVATTLGLSLVT) lie on the Periplasmic side of the membrane. Residues 342–362 (LLFMTTALLGWYYVLPFVLFL) form a helical membrane-spanning segment. At 363–395 (QGMVNSTRFSSMNTLTLKDLPDNLASSGNSLLS) the chain is on the cytoplasmic side. The chain crosses the membrane as a helical span at residues 396 to 416 (MIMQLSMSIGVTIAGLLLGLF). The Periplasmic segment spans residues 417–430 (GSQHVSVDSGTTQT). Residues 431–451 (VFMYTWLSMAFIIALPAFIFA) form a helical membrane-spanning segment. At 452–471 (RVPNDTHQNVAISRRKRSAQ) the chain is on the cytoplasmic side.

It belongs to the major facilitator superfamily. TCR/Tet family.

Its subcellular location is the cell inner membrane. This Shigella flexneri serotype 5b (strain 8401) protein is Putative multidrug resistance protein MdtD.